Consider the following 505-residue polypeptide: Lysine--tRNA ligase (505 aa).

E415 and E422 together coordinate Mg(2+).

Belongs to the class-II aminoacyl-tRNA synthetase family. Homodimer. Mg(2+) is required as a cofactor.

It is found in the cytoplasm. It carries out the reaction tRNA(Lys) + L-lysine + ATP = L-lysyl-tRNA(Lys) + AMP + diphosphate. In Escherichia coli (strain K12), this protein is Lysine--tRNA ligase (lysS).